The primary structure comprises 235 residues: Elongation factor Tu (235 aa).

In terms of domain architecture, tr-type G spans 1 to 125 (KNMITGATQM…DGDKYIPTPS (125 aa)). 47–50 (NKQD) is a binding site for GTP.

The protein belongs to the TRAFAC class translation factor GTPase superfamily. Classic translation factor GTPase family. EF-Tu/EF-1A subfamily. As to quaternary structure, monomer.

Its subcellular location is the cytoplasm. It catalyses the reaction GTP + H2O = GDP + phosphate + H(+). GTP hydrolase that promotes the GTP-dependent binding of aminoacyl-tRNA to the A-site of ribosomes during protein biosynthesis. The sequence is that of Elongation factor Tu (tufA) from Leptolyngbya boryana (Plectonema boryanum).